Consider the following 314-residue polypeptide: Homoserine kinase (314 aa).

96-106 (PIGSGLGSSAC) is an ATP binding site.

Belongs to the GHMP kinase family. Homoserine kinase subfamily.

Its subcellular location is the cytoplasm. It carries out the reaction L-homoserine + ATP = O-phospho-L-homoserine + ADP + H(+). It functions in the pathway amino-acid biosynthesis; L-threonine biosynthesis; L-threonine from L-aspartate: step 4/5. Its function is as follows. Catalyzes the ATP-dependent phosphorylation of L-homoserine to L-homoserine phosphate. The polypeptide is Homoserine kinase (Haemophilus influenzae (strain PittEE)).